The primary structure comprises 263 residues: Lens fiber major intrinsic protein (263 aa).

At 1 to 9 (MWELRSASF) the chain is on the cytoplasmic side. The helical transmembrane segment at 10 to 29 (WRAIFAEFFATLFYVFFGLG) threads the bilayer. At 30-41 (ASLRWAPGPLHV) the chain is on the extracellular side. Residues 42–59 (LQVALAFGLALATLVQTV) form a helical membrane-spanning segment. The Cytoplasmic segment spans residues 60 to 61 (GH). Residues 62–77 (ISGAHVNPAVTFAFLV) constitute an intramembrane region (discontinuously helical). The NPA 1 motif lies at 68–70 (NPA). Residues 78–82 (GSQMS) lie on the Cytoplasmic side of the membrane. The helical transmembrane segment at 83–106 (LLRAFCYIAAQLLGAVAGAAVLYS) threads the bilayer. Residues 107-127 (VTPPAVRGNLALNTLHAGVSV) are Extracellular-facing. The helical transmembrane segment at 128 to 148 (GQATTVEIFLTLQFVLCIFAT) threads the bilayer. Topologically, residues 149-156 (YDERRNGR) are cytoplasmic. A helical transmembrane segment spans residues 157–175 (MGSVALAVGFSLTLGHLFG). Topologically, residues 176–178 (MYY) are extracellular. Residues 179–193 (TGAGMNPARSFAPAI) constitute an intramembrane region (discontinuously helical). The NPA 2 motif lies at 184–186 (NPA). Residues 194-200 (LTRNFSN) are Extracellular-facing. A helical membrane pass occupies residues 201–222 (HWVYWVGPIIGGGLGSLLYDFL). Residues 223-263 (LFPRLKSVSERLSILKGARPSDSNGQPEGTGEPVELKTQAL) lie on the Cytoplasmic side of the membrane. Residues 227–237 (LKSVSERLSIL) form an interaction with CALM region. Phosphoserine is present on residues Ser-235, Ser-243, and Ser-245. The segment at 240–263 (ARPSDSNGQPEGTGEPVELKTQAL) is disordered. Asn-246 carries the deamidated asparagine modification.

It belongs to the MIP/aquaporin (TC 1.A.8) family. Homotetramer; each monomer provides an independent water pore. Two homotetramers on opposing membranes can dimerize, forming a cell-cell junction. Interacts with CALM; the calcium-calmodulin/CALM complex interacts with the cytoplasmic domains of two aquaporins, leading to channel closure. Interacts with BFSP1 (via C-terminus); prevents calcium-dependent inhibition of the water channel activity. Subject to partial proteolytic cleavage in the eye lens core. Partial proteolysis promotes interactions between tetramers from adjoining membranes. In terms of processing, fatty acylated at Met-1 and Lys-238. The acyl modifications, in decreasing order of ion abundance, are: oleoyl (C18:1) &gt; palmitoyl (C16:0) &gt; stearoyl (C18:0) &gt; eicosenoyl (C20:1) &gt; dihomo-gamma-linolenoyl (C20:3) &gt; palmitoleoyl (C16:1) &gt; eicosadienoyl (C20:2).

It is found in the cell membrane. The protein resides in the cell junction. The catalysed reaction is H2O(in) = H2O(out). Its activity is regulated as follows. The water channel activity is inhibited by calcium through calmodulin/CALM. Aquaporins form homotetrameric transmembrane channels, with each monomer independently mediating water transport across the plasma membrane along its osmotic gradient. Specifically expressed in lens fiber cells, this aquaporin is crucial for maintaining lens water homeostasis and transparency. Beyond water permeability, it also acts as a cell-to-cell adhesion molecule, forming thin junctions between lens fiber cells that are essential for maintaining the ordered structure and transparency of the lens. The protein is Lens fiber major intrinsic protein of Mus musculus (Mouse).